The following is an 830-amino-acid chain: ATP-dependent DNA helicase chl-1 (830 aa).

One can recognise a Helicase ATP-binding domain in the interval 1–403; sequence MDEFSFPFQP…HNLLYMKQLE (403 aa). 35–42 contributes to the ATP binding site; sequence SPTGTGKS. Basic and acidic residues-rich tracts occupy residues 124-140 and 157-168; these read GMVE…RDTD and NDEKSEKQRDSD. Residues 124–173 form a disordered region; that stretch reads GMVEVSRKRKAPARDTDQFLEPQDEAAPSEEYNNDEKSEKQRDSDFFDDV. 4 residues coordinate [4Fe-4S] cluster: C222, C240, C272, and C308. The short motif at 351-354 is the DEAH box element; it reads DEAH.

The protein belongs to the DEAD box helicase family. DEAH subfamily. DDX11/CHL1 sub-subfamily. [4Fe-4S] cluster is required as a cofactor.

The protein localises to the nucleus. It catalyses the reaction Couples ATP hydrolysis with the unwinding of duplex DNA at the replication fork by translocating in the 5'-3' direction. This creates two antiparallel DNA single strands (ssDNA). The leading ssDNA polymer is the template for DNA polymerase III holoenzyme which synthesizes a continuous strand.. The enzyme catalyses ATP + H2O = ADP + phosphate + H(+). In terms of biological role, required for normal cell proliferation and chromosome stability. Plays a role in DNA repair during replication. This chain is ATP-dependent DNA helicase chl-1, found in Caenorhabditis elegans.